A 213-amino-acid chain; its full sequence is Peptidyl-prolyl cis-trans isomerase B (213 aa).

A signal peptide spans 1–23; it reads MAVLRVLCGLLLVSILFLGFVLS. Residues 35-197 form the PPIase cyclophilin-type domain; it reads FFDIEVDEQP…KSVKIANCGH (163 aa). Residues 210–213 carry the Prevents secretion from ER motif; the sequence is DAAE.

This sequence belongs to the cyclophilin-type PPIase family. PPIase B subfamily.

The protein resides in the endoplasmic reticulum lumen. The catalysed reaction is [protein]-peptidylproline (omega=180) = [protein]-peptidylproline (omega=0). Its activity is regulated as follows. Inhibited by cyclosporin A (CsA). In terms of biological role, PPIases accelerate the folding of proteins. It catalyzes the cis-trans isomerization of proline imidic peptide bonds in oligopeptides. In Schistosoma japonicum (Blood fluke), this protein is Peptidyl-prolyl cis-trans isomerase B.